Reading from the N-terminus, the 125-residue chain is Fluoride-specific ion channel FluC (125 aa).

The next 4 membrane-spanning stretches (helical) occupy residues 1-21 (MFAT…ARYG), 34-54 (FPWA…FLFF), 72-92 (TGGL…LVLF), and 101-121 (LLYM…GAWI). Residues glycine 76 and threonine 79 each coordinate Na(+).

It belongs to the fluoride channel Fluc/FEX (TC 1.A.43) family.

Its subcellular location is the cell inner membrane. The catalysed reaction is fluoride(in) = fluoride(out). Its activity is regulated as follows. Na(+) is not transported, but it plays an essential structural role and its presence is essential for fluoride channel function. In terms of biological role, fluoride-specific ion channel. Important for reducing fluoride concentration in the cell, thus reducing its toxicity. The chain is Fluoride-specific ion channel FluC from Acidithiobacillus ferrooxidans (strain ATCC 23270 / DSM 14882 / CIP 104768 / NCIMB 8455) (Ferrobacillus ferrooxidans (strain ATCC 23270)).